A 478-amino-acid chain; its full sequence is TFIIA-alpha and beta-like factor (478 aa).

The segment at 309-427 is disordered; the sequence is VKQPRNIEEP…SGDDVSEQDV (119 aa). Polar residues predominate over residues 390 to 401; that stretch reads SISNEDSATNSS. Over residues 411-427 the composition is skewed to acidic residues; sequence VEEDPLNSGDDVSEQDV.

It belongs to the TFIIA subunit 1 family. As to expression, testis specific. Detected in adult testis mostly in round and elongating spermatids (at protein level). Detected in testis.

The protein resides in the nucleus. Its function is as follows. May function as a testis specific transcription factor. Binds DNA in conjunction with GTF2A2 and TBP (the TATA-binding protein) and together with GTF2A2, allows mRNA transcription. The polypeptide is TFIIA-alpha and beta-like factor (GTF2A1L) (Homo sapiens (Human)).